The chain runs to 148 residues: UPF0178 protein DP1304 (148 aa).

It belongs to the UPF0178 family.

The chain is UPF0178 protein DP1304 from Desulfotalea psychrophila (strain LSv54 / DSM 12343).